Here is a 207-residue protein sequence, read N- to C-terminus: Venom allergen 5 (207 aa).

Cystine bridges form between C4–C16, C8–C105, and C29–C97. The 144-residue stretch at 49–192 (DEHNRFRQKV…MKSHYLVCNY (144 aa)) folds into the SCP domain. Y111 is modified (phosphotyrosine). N-linked (Glc) (glycation) lysine glycosylation occurs at K141. C173 and C190 are disulfide-bonded.

Belongs to the CRISP family. Venom allergen 5-like subfamily. Post-translationally, glycosylated. As to expression, expressed by the venom gland.

The protein resides in the secreted. The polypeptide is Venom allergen 5 (Polybia paulista (Neotropical social wasp)).